Reading from the N-terminus, the 267-residue chain is Acetylglutamate kinase (267 aa).

Substrate contacts are provided by residues 53–54, arginine 75, and asparagine 167; that span reads GG.

This sequence belongs to the acetylglutamate kinase family. ArgB subfamily.

It is found in the cytoplasm. It catalyses the reaction N-acetyl-L-glutamate + ATP = N-acetyl-L-glutamyl 5-phosphate + ADP. It functions in the pathway amino-acid biosynthesis; L-arginine biosynthesis; N(2)-acetyl-L-ornithine from L-glutamate: step 2/4. Catalyzes the ATP-dependent phosphorylation of N-acetyl-L-glutamate. The polypeptide is Acetylglutamate kinase (Shewanella pealeana (strain ATCC 700345 / ANG-SQ1)).